The primary structure comprises 212 residues: Adenylate kinase (212 aa).

10 to 15 (GAGKGT) serves as a coordination point for ATP. Positions 30 to 59 (STGDMFRAAIANQTEMGVLAKSYIDKGELV) are NMP. Residues Thr31, Arg36, 57 to 59 (ELV), 86 to 89 (GYPR), and Gln93 contribute to the AMP site. The segment at 127–159 (GRIIHRETGETFHKVFNPPADYKEEDYYQREDD) is LID. ATP-binding positions include Arg128 and 137 to 138 (TF). Residues Arg156 and Arg167 each coordinate AMP. Gln195 lines the ATP pocket.

The protein belongs to the adenylate kinase family. Monomer.

The protein localises to the cytoplasm. The enzyme catalyses AMP + ATP = 2 ADP. Its pathway is purine metabolism; AMP biosynthesis via salvage pathway; AMP from ADP: step 1/1. Functionally, catalyzes the reversible transfer of the terminal phosphate group between ATP and AMP. Plays an important role in cellular energy homeostasis and in adenine nucleotide metabolism. This is Adenylate kinase from Streptococcus sanguinis (strain SK36).